Here is a 121-residue protein sequence, read N- to C-terminus: Large ribosomal subunit protein bL12 (121 aa).

Belongs to the bacterial ribosomal protein bL12 family. In terms of assembly, homodimer. Part of the ribosomal stalk of the 50S ribosomal subunit. Forms a multimeric L10(L12)X complex, where L10 forms an elongated spine to which 2 to 4 L12 dimers bind in a sequential fashion. Binds GTP-bound translation factors.

In terms of biological role, forms part of the ribosomal stalk which helps the ribosome interact with GTP-bound translation factors. Is thus essential for accurate translation. This chain is Large ribosomal subunit protein bL12, found in Streptococcus equi subsp. equi (strain 4047).